We begin with the raw amino-acid sequence, 467 residues long: Methylenetetrahydrofolate--tRNA-(uracil-5-)-methyltransferase TrmFO (467 aa).

10–15 (GAGLAG) lines the FAD pocket.

The protein belongs to the MnmG family. TrmFO subfamily. It depends on FAD as a cofactor.

Its subcellular location is the cytoplasm. The enzyme catalyses uridine(54) in tRNA + (6R)-5,10-methylene-5,6,7,8-tetrahydrofolate + NADH + H(+) = 5-methyluridine(54) in tRNA + (6S)-5,6,7,8-tetrahydrofolate + NAD(+). It catalyses the reaction uridine(54) in tRNA + (6R)-5,10-methylene-5,6,7,8-tetrahydrofolate + NADPH + H(+) = 5-methyluridine(54) in tRNA + (6S)-5,6,7,8-tetrahydrofolate + NADP(+). Functionally, catalyzes the folate-dependent formation of 5-methyl-uridine at position 54 (M-5-U54) in all tRNAs. The sequence is that of Methylenetetrahydrofolate--tRNA-(uracil-5-)-methyltransferase TrmFO from Prochlorococcus marinus (strain MIT 9515).